A 1381-amino-acid chain; its full sequence is DNA-directed RNA polymerase subunit beta'' (1381 aa).

Zn(2+) contacts are provided by C224, C295, C302, and C305.

This sequence belongs to the RNA polymerase beta' chain family. RpoC2 subfamily. In plastids the minimal PEP RNA polymerase catalytic core is composed of four subunits: alpha, beta, beta', and beta''. When a (nuclear-encoded) sigma factor is associated with the core the holoenzyme is formed, which can initiate transcription. Zn(2+) is required as a cofactor.

The protein localises to the plastid. It localises to the chloroplast. The enzyme catalyses RNA(n) + a ribonucleoside 5'-triphosphate = RNA(n+1) + diphosphate. In terms of biological role, DNA-dependent RNA polymerase catalyzes the transcription of DNA into RNA using the four ribonucleoside triphosphates as substrates. This chain is DNA-directed RNA polymerase subunit beta'', found in Lactuca sativa (Garden lettuce).